The primary structure comprises 361 residues: MNWDETGPETDEPTGPVLDDRLVDADADGEDTAVEAALRPKDLEEFVGQEKVREQLDLVLKAARARGATADHVLLSGAPGLGKTTLSMIIAAEMNAPIRITSGPAIQHAGDLAAILSSLQEGEVLFLDEIHRMSRPAEEMLYMAMEDFRVDVIVGKGPGATAIPLELPPFTLVGATTRAGLLPPPLRDRFGFTGHMEFYAPAELERVLHRSARLLDVGIDGEGAAEIAGRSRGTPRIANRLLRRVRDYAQVKAEGTIDRSIAMAALKVYEVDARGLDRLDRAVLGALLKLFGGGPVGLSTLAVAVGEERETVEEVAEPFLVREGLLARTPRGRVATPAAWAHLGLVPPQHGAKGQQGLFGA.

Positions 1-12 are enriched in acidic residues; it reads MNWDETGPETDE. A disordered region spans residues 1 to 21; sequence MNWDETGPETDEPTGPVLDDR. The segment at 13–199 is large ATPase domain (RuvB-L); that stretch reads PTGPVLDDRL…FGFTGHMEFY (187 aa). ATP-binding positions include Leu38, Arg39, Gly80, Lys83, Thr84, Thr85, 146–148, Arg189, Tyr199, and Arg236; that span reads EDF. Mg(2+) is bound at residue Thr84. A small ATPAse domain (RuvB-S) region spans residues 200–270; sequence APAELERVLH…IAMAALKVYE (71 aa). Residues 273-361 are head domain (RuvB-H); it reads ARGLDRLDRA…AKGQQGLFGA (89 aa). DNA is bound by residues Arg309, Arg328, and Arg333.

It belongs to the RuvB family. In terms of assembly, homohexamer. Forms an RuvA(8)-RuvB(12)-Holliday junction (HJ) complex. HJ DNA is sandwiched between 2 RuvA tetramers; dsDNA enters through RuvA and exits via RuvB. An RuvB hexamer assembles on each DNA strand where it exits the tetramer. Each RuvB hexamer is contacted by two RuvA subunits (via domain III) on 2 adjacent RuvB subunits; this complex drives branch migration. In the full resolvosome a probable DNA-RuvA(4)-RuvB(12)-RuvC(2) complex forms which resolves the HJ.

The protein resides in the cytoplasm. It catalyses the reaction ATP + H2O = ADP + phosphate + H(+). Its function is as follows. The RuvA-RuvB-RuvC complex processes Holliday junction (HJ) DNA during genetic recombination and DNA repair, while the RuvA-RuvB complex plays an important role in the rescue of blocked DNA replication forks via replication fork reversal (RFR). RuvA specifically binds to HJ cruciform DNA, conferring on it an open structure. The RuvB hexamer acts as an ATP-dependent pump, pulling dsDNA into and through the RuvAB complex. RuvB forms 2 homohexamers on either side of HJ DNA bound by 1 or 2 RuvA tetramers; 4 subunits per hexamer contact DNA at a time. Coordinated motions by a converter formed by DNA-disengaged RuvB subunits stimulates ATP hydrolysis and nucleotide exchange. Immobilization of the converter enables RuvB to convert the ATP-contained energy into a lever motion, pulling 2 nucleotides of DNA out of the RuvA tetramer per ATP hydrolyzed, thus driving DNA branch migration. The RuvB motors rotate together with the DNA substrate, which together with the progressing nucleotide cycle form the mechanistic basis for DNA recombination by continuous HJ branch migration. Branch migration allows RuvC to scan DNA until it finds its consensus sequence, where it cleaves and resolves cruciform DNA. The chain is Holliday junction branch migration complex subunit RuvB from Streptomyces griseus subsp. griseus (strain JCM 4626 / CBS 651.72 / NBRC 13350 / KCC S-0626 / ISP 5235).